Consider the following 80-residue polypeptide: Clavanin-E (80 aa).

A signal peptide spans 1–19 (MKTTILILLILGLGINAKS). Residues 20-29 (LEERKSEEEK) constitute a propeptide that is removed on maturation. F52 is subject to Phenylalanine amide. Positions 54 to 80 (DDQQDNGKFYGYYAEDNGKHWYDTGDQ) are excised as a propeptide.

It localises to the secreted. Functionally, has antimicrobial activity. The chain is Clavanin-E from Styela clava (Sea squirt).